We begin with the raw amino-acid sequence, 238 residues long: Probable transcriptional regulatory protein SGO_0454 (238 aa).

This sequence belongs to the TACO1 family. YeeN subfamily.

It is found in the cytoplasm. The sequence is that of Probable transcriptional regulatory protein SGO_0454 from Streptococcus gordonii (strain Challis / ATCC 35105 / BCRC 15272 / CH1 / DL1 / V288).